Consider the following 160-residue polypeptide: Ureidoglycolate lyase (160 aa).

Belongs to the ureidoglycolate lyase family. Homodimer. It depends on Ni(2+) as a cofactor.

The enzyme catalyses (S)-ureidoglycolate = urea + glyoxylate. Its pathway is nitrogen metabolism; (S)-allantoin degradation. In terms of biological role, catalyzes the catabolism of the allantoin degradation intermediate (S)-ureidoglycolate, generating urea and glyoxylate. Involved in the utilization of allantoin as nitrogen source. This is Ureidoglycolate lyase from Salmonella gallinarum (strain 287/91 / NCTC 13346).